A 229-amino-acid chain; its full sequence is Uracil-DNA glycosylase (229 aa).

The Proton acceptor role is filled by Asp64.

It belongs to the uracil-DNA glycosylase (UDG) superfamily. UNG family.

The protein resides in the cytoplasm. The catalysed reaction is Hydrolyzes single-stranded DNA or mismatched double-stranded DNA and polynucleotides, releasing free uracil.. Its function is as follows. Excises uracil residues from the DNA which can arise as a result of misincorporation of dUMP residues by DNA polymerase or due to deamination of cytosine. The protein is Uracil-DNA glycosylase of Salmonella arizonae (strain ATCC BAA-731 / CDC346-86 / RSK2980).